Reading from the N-terminus, the 204-residue chain is Altered inheritance of mitochondria protein 20 (204 aa).

The chain crosses the membrane as a helical span at residues 6-26 (VAVGTAVGIPIAVGVIIALIF).

It belongs to the SKG1 family.

The protein localises to the vacuole membrane. In terms of biological role, involved in cell cycle progression and surviving DNA damage. This chain is Altered inheritance of mitochondria protein 20 (AIM20), found in Saccharomyces cerevisiae (strain JAY291) (Baker's yeast).